The primary structure comprises 205 residues: Ras-like protein 3 (205 aa).

G16 to S23 contributes to the GTP binding site. An Effector region motif is present at residues Y38–Y46. GTP-binding positions include D63–Q67 and N122–D125. C202 carries the cysteine methyl ester modification. The S-farnesyl cysteine moiety is linked to residue C202. A propeptide spans I203–M205 (removed in mature form).

It belongs to the small GTPase superfamily. Ras family.

Its subcellular location is the cell membrane. It carries out the reaction GTP + H2O = GDP + phosphate + H(+). Alternates between an inactive form bound to GDP and an active form bound to GTP. Activated by a guanine nucleotide-exchange factor (GEF) and inactivated by a GTPase-activating protein (GAP). In Mucor circinelloides f. lusitanicus (Mucor racemosus var. lusitanicus), this protein is Ras-like protein 3 (RAS3).